The following is a 330-amino-acid chain: Glycoprotein integral membrane protein 1 (330 aa).

Positions 1 to 23 are cleaved as a signal peptide; sequence MEGAPLGPLALRLLLFVALPASG. Residues 24-268 are Extracellular-facing; sequence WLTTGAPEPP…VFPVFFQFLN (245 aa). N46, N64, N166, and N191 each carry an N-linked (GlcNAc...) asparagine glycan. The helical transmembrane segment at 269 to 289 threads the bilayer; it reads IMVVGITGAAVVITILKVLFP. Residues 290-330 are Cytoplasmic-facing; sequence VSEYKGILQLDKVDVIPVTAINLYPDGPEKTAENLEDKTCI.

The protein resides in the membrane. The protein is Glycoprotein integral membrane protein 1 (GINM1) of Pongo abelii (Sumatran orangutan).